The primary structure comprises 488 residues: 3-octaprenyl-4-hydroxybenzoate carboxy-lyase (488 aa).

Position 172 (N172) interacts with Mn(2+). Prenylated FMN-binding positions include 175–177 (IYR), 189–191 (RWL), and 194–195 (RG). E238 provides a ligand contact to Mn(2+). The Proton donor role is filled by D287.

The protein belongs to the UbiD family. In terms of assembly, homohexamer. Requires prenylated FMN as cofactor. Mn(2+) serves as cofactor.

The protein localises to the cell membrane. It carries out the reaction a 4-hydroxy-3-(all-trans-polyprenyl)benzoate + H(+) = a 2-(all-trans-polyprenyl)phenol + CO2. The protein operates within cofactor biosynthesis; ubiquinone biosynthesis. Catalyzes the decarboxylation of 3-octaprenyl-4-hydroxy benzoate to 2-octaprenylphenol, an intermediate step in ubiquinone biosynthesis. The chain is 3-octaprenyl-4-hydroxybenzoate carboxy-lyase from Pseudomonas syringae pv. tomato (strain ATCC BAA-871 / DC3000).